Reading from the N-terminus, the 276-residue chain is NH(3)-dependent NAD(+) synthetase (276 aa).

Residue 43 to 50 (GISGGVDS) participates in ATP binding. Residue Asp49 participates in Mg(2+) binding. Residue Arg146 participates in deamido-NAD(+) binding. Thr166 is an ATP binding site. Position 171 (Glu171) interacts with Mg(2+). The deamido-NAD(+) site is built by Lys179 and Asp186. Lys195 and Thr217 together coordinate ATP. 266 to 267 (HK) lines the deamido-NAD(+) pocket.

This sequence belongs to the NAD synthetase family. Homodimer.

It carries out the reaction deamido-NAD(+) + NH4(+) + ATP = AMP + diphosphate + NAD(+) + H(+). Its pathway is cofactor biosynthesis; NAD(+) biosynthesis; NAD(+) from deamido-NAD(+) (ammonia route): step 1/1. Functionally, catalyzes the ATP-dependent amidation of deamido-NAD to form NAD. Uses ammonia as a nitrogen source. The sequence is that of NH(3)-dependent NAD(+) synthetase from Vibrio vulnificus (strain YJ016).